The following is a 436-amino-acid chain: Homeobox protein PKNOX1 (436 aa).

A compositionally biased stretch (polar residues) spans 1-20 (MMATQTLSIDSYQDGQQMQV). The disordered stretch occupies residues 1–49 (MMATQTLSIDSYQDGQQMQVVTELKTEQDPNCSEPDAEGVSPPPVESQT). 2 positions are modified to phosphoserine: Ser33 and Ser41. The region spanning 80–163 (GSEGTTSASF…MNSETLLSGE (84 aa)) is the MEIS N-terminal domain. Positions 259–321 (SKNKRGVLPK…NARRRILQPM (63 aa)) form a DNA-binding region, homeobox; TALE-type. Residues 401–436 (AGQSEDESVDSTEEDAGALAPAHISGLVLENSDSLQ) are disordered. A compositionally biased stretch (acidic residues) spans 404 to 416 (SEDESVDSTEEDA).

Belongs to the TALE/MEIS homeobox family. In terms of assembly, interacts with MN1. As to expression, ubiquitous. Isoform 2 is expressed in all examined tissues except in bone marrow.

It is found in the nucleus. Activates transcription in the presence of PBX1A and HOXA1. In Homo sapiens (Human), this protein is Homeobox protein PKNOX1.